We begin with the raw amino-acid sequence, 233 residues long: Ion-translocating oxidoreductase complex subunit E (233 aa).

The next 5 helical transmembrane spans lie at 22–42 (LLGL…LGLG), 69–89 (IPIY…LINA), 93–113 (GLYQ…IVVG), 128–148 (ALDG…LGSI), and 182–202 (PMLL…LLAA).

Belongs to the NqrDE/RnfAE family. As to quaternary structure, the complex is composed of six subunits: RnfA, RnfB, RnfC, RnfD, RnfE and RnfG.

It localises to the cell inner membrane. Part of a membrane-bound complex that couples electron transfer with translocation of ions across the membrane. In Erwinia tasmaniensis (strain DSM 17950 / CFBP 7177 / CIP 109463 / NCPPB 4357 / Et1/99), this protein is Ion-translocating oxidoreductase complex subunit E.